An 86-amino-acid polypeptide reads, in one-letter code: Translation machinery-associated protein 10 (86 aa).

Residues Ser-28 and Ser-79 each carry the phosphoserine modification. Residues 63–86 are disordered; the sequence is NKTRRGSNSQNNERRLSDLQQYHI.

It belongs to the STF2 family. Associates with ribosomes.

The protein resides in the cytoplasm. The protein localises to the nucleus. In terms of biological role, may be involved in inhibition of the reverse ATPase reaction of mitochondrial F(1)F(0)-type ATP synthase. This chain is Translation machinery-associated protein 10, found in Saccharomyces cerevisiae (strain ATCC 204508 / S288c) (Baker's yeast).